The primary structure comprises 423 residues: Zinc finger protein Gfi-1 (423 aa).

Residues 1-20 (MPRSFLVKSKKAHSYHQPRS) are SNAG domain. The disordered stretch occupies residues 1 to 102 (MPRSFLVKSK…PPSPSVSPAS (102 aa)). Phosphoserine occurs at positions 20 and 57. The segment covering 48 to 57 (SKMEPRERLS) has biased composition (basic and acidic residues). Residues 141–258 (RQCSALERSA…LLLGGGSYKC (118 aa)) form a required for interaction with RELA region. 6 C2H2-type zinc fingers span residues 256–279 (YKCI…RRSH), 285–307 (FACE…KAVH), 313–335 (FDCK…LLIH), 341–363 (YPCQ…TFIH), 369–391 (HKCQ…SRKH), and 397–420 (FGCD…ETQH).

As to quaternary structure, interacts with U2AF1L4. Component of RCOR-GFI-KDM1A-HDAC complexes. Interacts directly with RCOR1, KDM1A and HDAC2. Also interacts with HDAC1. regions. Interacts (via the zinc-finger domain) with ARIH2; the interaction prevents GFI1 ubiquitination and proteasomal degradation. Interacts with PIAS3; the interaction relieves the inhibitory effect of PIAS3 on STAT3-mediated transcriptional activity. Forms a complex with EHMT2 and HDAC1 to promote 'Lys-9' dimethylation of H3 (H3K9Me2) and repress expression of target genes. Interacts directly with EHMT2. Component of the GFI1-AJUBA-HDAC1 repressor complex. Interacts directly with AJUBA (via ITS LIM domains); the interaction results in the HDAC-dependent corepression of a subset of GFI1 target genes and, occurs independent of the SNAG domain. Interacts with SPI1; the interaction inhibits SPI1 transcriptional activity targeted at macrophage-specific genes, repressing macrophage differentiation of myeloid progenitor cells and promoting granulocyte commitment. Interacts with RUNX1T1; the interaction represses HDAC-mediated transcriptional activity. Interacts with RELA; the interaction occurs on liposaccharide (LPS) stimulation controls RELA DNA binding activity and regulates endotoxin-mediated TOLL-like receptor inflammatory response. Interacts (via the C-terminal zinc fingers) with ZBTB17; the interaction results in the recruitment of GFI1 to the CDKN1A/p21 promoter and repression of CDKN1A/p21 transcription. In terms of processing, ubiquitinated. In terms of tissue distribution, restricted to lymphoid tissues and testes in adult animals.

The protein localises to the nucleus. In terms of biological role, transcription repressor essential for hematopoiesis. Functions in a cell-context and development-specific manner. Binds to 5'-TAAATCAC[AT]GCA-3' in the promoter region of a large number of genes. Component of several complexes, including the EHMT2-GFI1-HDAC1, AJUBA-GFI1-HDAC1 and RCOR-GFI-KDM1A-HDAC complexes, that suppress, via histone deacetylase (HDAC) recruitment, a number of genes implicated in multilineage blood cell development. Regulates neutrophil differentiation, promotes proliferation of lymphoid cells, and is required for granulocyte development. Inhibits SPI1 transcriptional activity at macrophage-specific genes, repressing macrophage differentiation of myeloid progenitor cells and promoting granulocyte commitment. Mediates, together with U2AF1L4, the alternative splicing of CD45 and controls T-cell receptor signaling. Regulates the endotoxin-mediated Toll-like receptor (TLR) inflammatory response by antagonizing RELA. Cooperates with CBFA2T2 to regulate ITGB1-dependent neurite growth. Controls cell-cycle progression by repressing CDKNIA/p21 transcription in response to TGFB1 via recruitment of GFI1 by ZBTB17 to the CDKNIA/p21 and CDKNIB promoters. Required for the maintenance of inner ear hair cells. In addition to its role in transcription, acts as a substrate adapter for PRMT1 in the DNA damage response: facilitates the recognition of TP53BP1 and MRE11 substrates by PRMT1, promoting their methylation and the DNA damage response. This Rattus norvegicus (Rat) protein is Zinc finger protein Gfi-1 (Gfi1).